The primary structure comprises 180 residues: Acireductone dioxygenase (180 aa).

Fe(2+) contacts are provided by H97, H99, E103, and H141. Ni(2+)-binding residues include H97, H99, E103, and H141.

Belongs to the acireductone dioxygenase (ARD) family. As to quaternary structure, monomer. Fe(2+) is required as a cofactor. Ni(2+) serves as cofactor.

It catalyses the reaction 1,2-dihydroxy-5-(methylsulfanyl)pent-1-en-3-one + O2 = 3-(methylsulfanyl)propanoate + CO + formate + 2 H(+). The catalysed reaction is 1,2-dihydroxy-5-(methylsulfanyl)pent-1-en-3-one + O2 = 4-methylsulfanyl-2-oxobutanoate + formate + 2 H(+). The protein operates within amino-acid biosynthesis; L-methionine biosynthesis via salvage pathway; L-methionine from S-methyl-5-thio-alpha-D-ribose 1-phosphate: step 5/6. Catalyzes 2 different reactions between oxygen and the acireductone 1,2-dihydroxy-3-keto-5-methylthiopentene (DHK-MTPene) depending upon the metal bound in the active site. Fe-containing acireductone dioxygenase (Fe-ARD) produces formate and 2-keto-4-methylthiobutyrate (KMTB), the alpha-ketoacid precursor of methionine in the methionine recycle pathway. Ni-containing acireductone dioxygenase (Ni-ARD) produces methylthiopropionate, carbon monoxide and formate, and does not lie on the methionine recycle pathway. The polypeptide is Acireductone dioxygenase (Cronobacter sakazakii (Enterobacter sakazakii)).